Here is a 270-residue protein sequence, read N- to C-terminus: uncharacterized protein (270 aa).

Residues Leu-34–Asp-266 form the ABC transporter domain. Gly-66 to Thr-73 is a binding site for ATP.

It belongs to the ABC transporter superfamily.

This is an uncharacterized protein from Rhizobium meliloti (strain 1021) (Ensifer meliloti).